A 443-amino-acid polypeptide reads, in one-letter code: Xaa-Pro dipeptidase (443 aa).

Positions 246, 257, 339, 384, and 423 each coordinate Mn(2+).

It belongs to the peptidase M24B family. Bacterial-type prolidase subfamily. Mn(2+) serves as cofactor.

It carries out the reaction Xaa-L-Pro dipeptide + H2O = an L-alpha-amino acid + L-proline. Its function is as follows. Splits dipeptides with a prolyl residue in the C-terminal position. In Enterobacter sp. (strain 638), this protein is Xaa-Pro dipeptidase.